A 316-amino-acid polypeptide reads, in one-letter code: Methionyl-tRNA formyltransferase (316 aa).

Residue 113–116 participates in (6S)-5,6,7,8-tetrahydrofolate binding; the sequence is SLLP.

This sequence belongs to the Fmt family.

The catalysed reaction is L-methionyl-tRNA(fMet) + (6R)-10-formyltetrahydrofolate = N-formyl-L-methionyl-tRNA(fMet) + (6S)-5,6,7,8-tetrahydrofolate + H(+). Attaches a formyl group to the free amino group of methionyl-tRNA(fMet). The formyl group appears to play a dual role in the initiator identity of N-formylmethionyl-tRNA by promoting its recognition by IF2 and preventing the misappropriation of this tRNA by the elongation apparatus. In Sodalis glossinidius (strain morsitans), this protein is Methionyl-tRNA formyltransferase.